A 101-amino-acid polypeptide reads, in one-letter code: Small ribosomal subunit protein uS14 (101 aa).

A compositionally biased stretch (basic and acidic residues) spans 1-10 (MAKNSMVERD). Positions 1-20 (MAKNSMVERDRKRRKLAQKY) are disordered.

This sequence belongs to the universal ribosomal protein uS14 family. As to quaternary structure, part of the 30S ribosomal subunit. Contacts proteins S3 and S10.

Binds 16S rRNA, required for the assembly of 30S particles and may also be responsible for determining the conformation of the 16S rRNA at the A site. This is Small ribosomal subunit protein uS14 from Halorhodospira halophila (strain DSM 244 / SL1) (Ectothiorhodospira halophila (strain DSM 244 / SL1)).